The following is a 554-amino-acid chain: Valerianol synthase TPS1F (554 aa).

Asp-307 and Asp-311 together coordinate Mg(2+). Positions 326-330 (VQRWD) match the DDXXD motif motif. 3 residues coordinate Mg(2+): Asp-452, Ser-456, and Glu-460.

The protein belongs to the terpene synthase family. Mg(2+) serves as cofactor.

The catalysed reaction is (2E,6E)-farnesyl diphosphate + H2O = valerianol + diphosphate. The protein operates within secondary metabolite biosynthesis; terpenoid biosynthesis. In terms of biological role, terpene synthase that catalyzes the biosynthesis of the terpene valerianol, which is a volatile compound of floral scent. In Camellia hiemalis (Camellia), this protein is Valerianol synthase TPS1F.